Reading from the N-terminus, the 466-residue chain is Myocardial zonula adherens protein (466 aa).

Positions Met1 to Leu10 are enriched in polar residues. A signal peptide spans Met1–Ala16. The tract at residues Met1 to Pro68 is disordered. A compositionally biased stretch (basic and acidic residues) spans Thr45–Pro55. 2 coiled-coil regions span residues Asn95–Ser137 and His187–Thr415.

This sequence belongs to the MYZAP family. As to quaternary structure, interacts with DSP, MPRIP and TJP1/ZO1. Interaction with MPRIP inhibits the activation of transcription factor SRF. Interacts with GRIN1. Interacts with DYNLL1. In terms of tissue distribution, detected in heart myocardium and lung.

Its subcellular location is the cytoplasm. It localises to the cytoskeleton. The protein localises to the cell membrane. It is found in the myofibril. The protein resides in the sarcomere. Its subcellular location is the i band. It localises to the z line. The protein localises to the cell junction. Plays a role in cellular signaling via Rho-related GTP-binding proteins and activation of transcription factor SRF. Targets TJP1 to cell junctions. In cortical neurons, may play a role in glutaminergic signal transduction through interaction with the NMDA receptor subunit GRIN1. This Mus musculus (Mouse) protein is Myocardial zonula adherens protein (Myzap).